We begin with the raw amino-acid sequence, 419 residues long: Akuammiline synthase 1 (419 aa).

H151 acts as the Proton acceptor in catalysis. The Nuclear localization signal motif lies at 206–213 (TRRFVFPA). The active-site Proton acceptor is the D359.

The protein belongs to the plant acyltransferase family. In terms of assembly, monomer.

Its subcellular location is the cytoplasm. The protein resides in the nucleus. The enzyme catalyses rhazimol + acetyl-CoA = akuammiline + CoA + H(+). The protein operates within alkaloid biosynthesis. Acyltransferase involved in the biosynthesis of akuammilan monoterpene indole alkaloids (MIAs) natural products, components with various biological properties such as antidiabetic, antibacterial, anti-inflammatory, anticancer, and antimalarial activities. Catalyzes the conversion of rhazimol to akuammiline. This is Akuammiline synthase 1 from Alstonia scholaris (Dogbane).